The primary structure comprises 647 residues: DNA mismatch repair protein MutL (647 aa).

Positions 375–433 (KQEEPQAVKQPTQLWQPPKQEWQPPQSLVREEQSWQPSTKPIIEEPIQEEKSWDSNEEG) are disordered. Low complexity predominate over residues 387–400 (QLWQPPKQEWQPPQ).

The protein belongs to the DNA mismatch repair MutL/HexB family.

Its function is as follows. This protein is involved in the repair of mismatches in DNA. It is required for dam-dependent methyl-directed DNA mismatch repair. May act as a 'molecular matchmaker', a protein that promotes the formation of a stable complex between two or more DNA-binding proteins in an ATP-dependent manner without itself being part of a final effector complex. The protein is DNA mismatch repair protein MutL of Bacillus cereus (strain AH820).